We begin with the raw amino-acid sequence, 338 residues long: Probable tRNA pseudouridine synthase B (338 aa).

The active-site Nucleophile is D78. Residues 245-320 (LPKIILRDSA…IAASPIRVLM (76 aa)) enclose the PUA domain.

This sequence belongs to the pseudouridine synthase TruB family. Type 2 subfamily.

It catalyses the reaction uridine(55) in tRNA = pseudouridine(55) in tRNA. Its function is as follows. Could be responsible for synthesis of pseudouridine from uracil-55 in the psi GC loop of transfer RNAs. In Methanosarcina mazei (strain ATCC BAA-159 / DSM 3647 / Goe1 / Go1 / JCM 11833 / OCM 88) (Methanosarcina frisia), this protein is Probable tRNA pseudouridine synthase B.